Reading from the N-terminus, the 81-residue chain is MSHAVKIYDTCIGCTQCVRACPLDVLEMVPWDGCKAGQIASSPRTEDCVGCKRCETACPTDFLSIRVYLGDETSRSMGLSY.

4Fe-4S ferredoxin-type domains lie at 2 to 31 (SHAV…MVPW) and 37 to 68 (GQIA…IRVY). C11, C14, C17, C21, C48, C51, C54, and C58 together coordinate [4Fe-4S] cluster.

In terms of assembly, the cyanobacterial PSI reaction center is composed of one copy each of PsaA,B,C,D,E,F,I,J,K,L,M and X, and forms trimeric complexes. [4Fe-4S] cluster is required as a cofactor.

Its subcellular location is the cellular thylakoid membrane. It catalyses the reaction reduced [plastocyanin] + hnu + oxidized [2Fe-2S]-[ferredoxin] = oxidized [plastocyanin] + reduced [2Fe-2S]-[ferredoxin]. Functionally, apoprotein for the two 4Fe-4S centers FA and FB of photosystem I (PSI); essential for photochemical activity. FB is the terminal electron acceptor of PSI, donating electrons to ferredoxin. The C-terminus interacts with PsaA/B/D and helps assemble the protein into the PSI complex. Required for binding of PsaD and PsaE to PSI. PSI is a plastocyanin/cytochrome c6-ferredoxin oxidoreductase, converting photonic excitation into a charge separation, which transfers an electron from the donor P700 chlorophyll pair to the spectroscopically characterized acceptors A0, A1, FX, FA and FB in turn. This Synechococcus sp. (strain WH7803) protein is Photosystem I iron-sulfur center.